The chain runs to 78 residues: Molt-inhibiting hormone (78 aa).

3 disulfide bridges follow: Cys7–Cys44, Cys24–Cys40, and Cys27–Cys53.

It is found in the secreted. In terms of biological role, inhibits Y-organs where molting hormone (ecdysteroid) is secreted. A molting cycle is initiated when MIH secretion diminishes or stops. Also has significant hyperglycemic hormone (CHH) activity. The chain is Molt-inhibiting hormone from Cancer pagurus (Rock crab).